Consider the following 320-residue polypeptide: ATP-dependent 6-phosphofructokinase (320 aa).

G12 serves as a coordination point for ATP. 22–26 (RGVVR) lines the ADP pocket. ATP contacts are provided by residues 73-74 (RF) and 103-106 (GDGS). Mg(2+) is bound at residue D104. A substrate-binding site is contributed by 126-128 (TID). The active-site Proton acceptor is the D128. ADP is bound at residue R155. Substrate-binding positions include R163 and 170 to 172 (MGR). ADP-binding positions include 186-188 (GCE), K212, and 214-216 (KKH). Substrate-binding positions include E223, R244, and 250 to 253 (HIQR).

This sequence belongs to the phosphofructokinase type A (PFKA) family. ATP-dependent PFK group I subfamily. Prokaryotic clade 'B1' sub-subfamily. Homotetramer. It depends on Mg(2+) as a cofactor.

It localises to the cytoplasm. The enzyme catalyses beta-D-fructose 6-phosphate + ATP = beta-D-fructose 1,6-bisphosphate + ADP + H(+). Its pathway is carbohydrate degradation; glycolysis; D-glyceraldehyde 3-phosphate and glycerone phosphate from D-glucose: step 3/4. Allosterically activated by ADP and other diphosphonucleosides, and allosterically inhibited by phosphoenolpyruvate. Its function is as follows. Catalyzes the phosphorylation of D-fructose 6-phosphate to fructose 1,6-bisphosphate by ATP, the first committing step of glycolysis. This chain is ATP-dependent 6-phosphofructokinase, found in Vibrio cholerae serotype O1 (strain ATCC 39315 / El Tor Inaba N16961).